Here is a 364-residue protein sequence, read N- to C-terminus: Chorismate synthase (364 aa).

Position 47 (Arg47) interacts with NADP(+). Residues 125-127 (RFS), Gly285, 300-304 (KPTPS), and Arg327 contribute to the FMN site.

It belongs to the chorismate synthase family. Homotetramer. Requires FMNH2 as cofactor.

It carries out the reaction 5-O-(1-carboxyvinyl)-3-phosphoshikimate = chorismate + phosphate. Its pathway is metabolic intermediate biosynthesis; chorismate biosynthesis; chorismate from D-erythrose 4-phosphate and phosphoenolpyruvate: step 7/7. Catalyzes the anti-1,4-elimination of the C-3 phosphate and the C-6 proR hydrogen from 5-enolpyruvylshikimate-3-phosphate (EPSP) to yield chorismate, which is the branch point compound that serves as the starting substrate for the three terminal pathways of aromatic amino acid biosynthesis. This reaction introduces a second double bond into the aromatic ring system. This is Chorismate synthase from Dehalococcoides mccartyi (strain ATCC BAA-2100 / JCM 16839 / KCTC 5957 / BAV1).